Here is an 860-residue protein sequence, read N- to C-terminus: Photoactivated adenylate cyclase subunit beta (860 aa).

The 94-residue stretch at 56-149 (LRRLMYLSKS…GRMYGDWHMK (94 aa)) folds into the BLUF 1 domain. The Guanylate cyclase 1 domain occupies 205-333 (VVTFIYLVEF…DCINTTSRIA (129 aa)). Residues 420 to 443 (RPPIFDDTPKGKPRPRTPGYGGRQ) form a disordered region. The 93-residue stretch at 471 to 563 (LTTLTYISQA…RAYPAEWTLT (93 aa)) folds into the BLUF 2 domain. The region spanning 619–748 (VMLATDICSF…AVSARVMEVE (130 aa)) is the Guanylate cyclase 2 domain. The segment at 819–860 (KPLALEPEEAKQDYRVSPGRMRHGDSGRRSNSAQGKRSTQVR) is disordered. Over residues 847 to 860 (RSNSAQGKRSTQVR) the composition is skewed to polar residues.

The protein belongs to the adenylyl cyclase class-4/guanylyl cyclase family. Heterotetramer of two alpha and two beta subunits. FAD serves as cofactor.

It is found in the cell projection. Its subcellular location is the cilium. It localises to the flagellum. It carries out the reaction ATP = 3',5'-cyclic AMP + diphosphate. Its function is as follows. Acts as a photoreceptor for the step-up photophobic response. This Euglena longa (Euglenophycean alga) protein is Photoactivated adenylate cyclase subunit beta.